Reading from the N-terminus, the 191-residue chain is Protein Ves (191 aa).

The protein belongs to the Ves family.

The protein is Protein Ves of Escherichia coli O7:K1 (strain IAI39 / ExPEC).